The sequence spans 175 residues: MLEESKNALRVFITGNPGVGKTTILLFLINKLSENNYKVAGFYCPEVRENGRRIGFRIVDITTNEGDWLAKENAPGRVKIGKYTVLEDSAKRITEITLSNINKADVLAIDEIGPMELKIPTIKKLIETILNNQKPLIAVLHRTQKPMGGRIYVITVENRDSIKYEILNYILSSLD.

ATP-binding positions include 15-22 (GNPGVGKT) and 106-113 (VLAIDEIG).

This sequence belongs to the THEP1 NTPase family.

It catalyses the reaction a ribonucleoside 5'-triphosphate + H2O = a ribonucleoside 5'-diphosphate + phosphate + H(+). Has nucleotide phosphatase activity towards ATP, GTP, CTP, TTP and UTP. May hydrolyze nucleoside diphosphates with lower efficiency. This chain is Nucleoside-triphosphatase THEP1, found in Saccharolobus solfataricus (strain ATCC 35092 / DSM 1617 / JCM 11322 / P2) (Sulfolobus solfataricus).